We begin with the raw amino-acid sequence, 60 residues long: Large ribosomal subunit protein uL30 (60 aa).

It belongs to the universal ribosomal protein uL30 family. As to quaternary structure, part of the 50S ribosomal subunit.

In Dehalococcoides mccartyi (strain CBDB1), this protein is Large ribosomal subunit protein uL30.